The chain runs to 312 residues: Malate dehydrogenase (312 aa).

Residues 7-13 (GAAGGIG) and Asp-34 each bind NAD(+). Substrate is bound by residues Arg-81 and Arg-87. NAD(+) contacts are provided by residues Asn-94 and 117–119 (ITN). The substrate site is built by Asn-119 and Arg-153. His-177 serves as the catalytic Proton acceptor. Met-227 serves as a coordination point for NAD(+).

This sequence belongs to the LDH/MDH superfamily. MDH type 1 family. In terms of assembly, homodimer.

It carries out the reaction (S)-malate + NAD(+) = oxaloacetate + NADH + H(+). Functionally, catalyzes the reversible oxidation of malate to oxaloacetate. This Enterobacter sp. (strain 638) protein is Malate dehydrogenase.